Here is a 308-residue protein sequence, read N- to C-terminus: Methionyl-tRNA formyltransferase (308 aa).

A (6S)-5,6,7,8-tetrahydrofolate-binding site is contributed by Ser-109–Pro-112.

The protein belongs to the Fmt family.

It carries out the reaction L-methionyl-tRNA(fMet) + (6R)-10-formyltetrahydrofolate = N-formyl-L-methionyl-tRNA(fMet) + (6S)-5,6,7,8-tetrahydrofolate + H(+). Functionally, attaches a formyl group to the free amino group of methionyl-tRNA(fMet). The formyl group appears to play a dual role in the initiator identity of N-formylmethionyl-tRNA by promoting its recognition by IF2 and preventing the misappropriation of this tRNA by the elongation apparatus. The chain is Methionyl-tRNA formyltransferase from Rhizorhabdus wittichii (strain DSM 6014 / CCUG 31198 / JCM 15750 / NBRC 105917 / EY 4224 / RW1) (Sphingomonas wittichii).